Reading from the N-terminus, the 208-residue chain is MVIAIDGPAASGKGTLARRLAAYYGLPHLDTGLLYRAVGAIVLAQGQLQDEAASVEAARTLDVATLDPEALRTAELGEAASVVAARGGVRAALLDLQHRFAAQPGGAVLDGRDIGTVICPKAQAKLFVTASPEVRAERRHRELIGRGEDVAYETVLADIRKRDERDSARAAAPLVQADDAVLLDTSALDIAQAFAAALAIVEARRAGR.

7 to 15 is an ATP binding site; sequence GPAASGKGT.

The protein belongs to the cytidylate kinase family. Type 1 subfamily.

Its subcellular location is the cytoplasm. The catalysed reaction is CMP + ATP = CDP + ADP. It carries out the reaction dCMP + ATP = dCDP + ADP. The sequence is that of Cytidylate kinase from Xanthobacter autotrophicus (strain ATCC BAA-1158 / Py2).